A 254-amino-acid polypeptide reads, in one-letter code: Phosphoribosylaminoimidazole-succinocarboxamide synthase (254 aa).

Belongs to the SAICAR synthetase family.

The enzyme catalyses 5-amino-1-(5-phospho-D-ribosyl)imidazole-4-carboxylate + L-aspartate + ATP = (2S)-2-[5-amino-1-(5-phospho-beta-D-ribosyl)imidazole-4-carboxamido]succinate + ADP + phosphate + 2 H(+). Its pathway is purine metabolism; IMP biosynthesis via de novo pathway; 5-amino-1-(5-phospho-D-ribosyl)imidazole-4-carboxamide from 5-amino-1-(5-phospho-D-ribosyl)imidazole-4-carboxylate: step 1/2. The sequence is that of Phosphoribosylaminoimidazole-succinocarboxamide synthase from Bartonella quintana (strain Toulouse) (Rochalimaea quintana).